A 357-amino-acid chain; its full sequence is Poly(3-hydroxyalkanoate) polymerase subunit PhaE (357 aa).

A disordered region spans residues 320–357; sequence AALAGEEPATKPATALRSPAPAAKAPARRRTTKTNPAD. Low complexity predominate over residues 331–344; the sequence is PATALRSPAPAAKA.

It belongs to the PHA/PHB synthase family. Type III PhaE subfamily. A large complex of PhaC and PhaE; the ratio of the subunits has been estimated to be from 1:1 to 4:1, with more PhaE than PhaC.

It localises to the cytoplasm. The protein operates within biopolymer metabolism; poly-(R)-3-hydroxybutanoate biosynthesis. Functionally, polymerizes D(-)-3-hydroxybutyryl-CoA to create polyhydroxybutyrate (PHB) which consists of thousands of hydroxybutyrate molecules linked end to end. This subunit has no catalytic activity but enhances the activity of PhaC, the catalytic subunit, 100-fold. The polypeptide is Poly(3-hydroxyalkanoate) polymerase subunit PhaE (Allochromatium vinosum (strain ATCC 17899 / DSM 180 / NBRC 103801 / NCIMB 10441 / D) (Chromatium vinosum)).